The primary structure comprises 283 residues: Urease accessory protein UreD (283 aa).

This sequence belongs to the UreD family. As to quaternary structure, ureD, UreF and UreG form a complex that acts as a GTP-hydrolysis-dependent molecular chaperone, activating the urease apoprotein by helping to assemble the nickel containing metallocenter of UreC. The UreE protein probably delivers the nickel.

The protein localises to the cytoplasm. Functionally, required for maturation of urease via the functional incorporation of the urease nickel metallocenter. The protein is Urease accessory protein UreD of Acaryochloris marina (strain MBIC 11017).